The following is a 262-amino-acid chain: Rhomboid-type serine protease 2 (262 aa).

Topologically, residues 1 to 16 (MNWKSYVFPGGHPPAA) are cytoplasmic. The helical transmembrane segment at 17-37 (LTTGLVVFLTAIYLLSFIFAL) threads the bilayer. Residues 38–57 (REDLSLAPESLFKLQMSRLS) lie on the Lumenal side of the membrane. A helical transmembrane segment spans residues 58 to 78 (LYPLIHLSLPHLLFNVLAIWA). Over 79 to 89 (PLNLFEETHGT) the chain is Cytoplasmic. A helical membrane pass occupies residues 90 to 110 (VYTGVFLNLSALFAGILYCLL). The Lumenal segment spans residues 111–112 (GK). Residues 113–133 (LLYPEALVAGASGWCFTLFAY) form a helical membrane-spanning segment. Catalysis depends on Ser-124, which acts as the Nucleophile. At 134–151 (YSFKESQIRPRTRIFRTD) the chain is on the cytoplasmic side. A helical transmembrane segment spans residues 152–168 (YSIPTLYTPLVLLVAIA). The Lumenal portion of the chain corresponds to 169–174 (VVIPGS). A helical membrane pass occupies residues 175–191 (SFWGHFFGLCVGYAIGY). Residue His-179 is part of the active site. Residues 192–262 (KESWFNKITP…DNSGTVLGTA (71 aa)) are Cytoplasmic-facing. A disordered region spans residues 243–262 (STETPLPLHNDNSGTVLGTA). Over residues 252–262 (NDNSGTVLGTA) the composition is skewed to polar residues.

The protein belongs to the peptidase S54 family. As to quaternary structure, interacts with SNX3.

Its subcellular location is the golgi apparatus membrane. The protein resides in the golgi apparatus. It localises to the cis-Golgi network membrane. It carries out the reaction Cleaves type-1 transmembrane domains using a catalytic dyad composed of serine and histidine that are contributed by different transmembrane domains.. Its function is as follows. Probable rhomboid-type serine protease that catalyzes intramembrane proteolysis. This chain is Rhomboid-type serine protease 2 (RBD2), found in Saccharomyces cerevisiae (strain ATCC 204508 / S288c) (Baker's yeast).